We begin with the raw amino-acid sequence, 354 residues long: Probable DNA repair protein RAD51 homolog 4 (354 aa).

ATP is bound at residue 115–122 (GNTSCGKT).

It belongs to the RecA family. RAD51 subfamily.

Its subcellular location is the nucleus. Its function is as follows. Involved in the homologous recombination repair (HRR) pathway of double-stranded DNA breaks arising during DNA replication or induced by DNA-damaging agents. The chain is Probable DNA repair protein RAD51 homolog 4 (rad51d) from Dictyostelium discoideum (Social amoeba).